We begin with the raw amino-acid sequence, 624 residues long: Chaperone protein HtpG (624 aa).

Positions 1 to 336 are a; substrate-binding; it reads MKGQETRGFQ…SNDLPLNVSR (336 aa). The b stretch occupies residues 337–552; the sequence is EILQDSTVTR…ADEMGTQMAK (216 aa). Residues 553–624 are c; that stretch reads LFAAAGQAMP…IKRVNALLLG (72 aa).

This sequence belongs to the heat shock protein 90 family. As to quaternary structure, homodimer.

Its subcellular location is the cytoplasm. Its function is as follows. Molecular chaperone. Has ATPase activity. This Enterobacter sp. (strain 638) protein is Chaperone protein HtpG.